We begin with the raw amino-acid sequence, 341 residues long: Cell wall mannoprotein PIR1 (341 aa).

Residues 1–18 form the signal peptide; that stretch reads MQYKKSLVASALVATSLA. A propeptide spanning residues 19-63 is cleaved from the precursor; sequence AYAPKDPWSTLTPSATYKGGITDYSSTFGIAVEPIATTASSKAKR. 8 PIR1/2/3 repeats span residues 64 to 82, 83 to 101, 102 to 120, 126 to 144, 145 to 163, 164 to 182, 183 to 201, and 202 to 220; these read AAAI…TKTT, AAAV…TKTK, AAAV…TKTT, AAAV…TNTT, and VAPV…TLTS.

The protein belongs to the PIR protein family. Covalently linked to beta-1,3-glucan of the inner cell wall layer via an alkali-sensitive ester linkage between the gamma-carboxyl group of glutamic acids, arising from specific glutamines within the PIR1/2/3 repeats, and hydroxyl groups of glucoses of beta-1,3-glucan chains. Post-translationally, O-glycosylated. Extensively O-mannosylated.

It localises to the secreted. The protein resides in the cell wall. Functionally, component of the outer cell wall layer. Required for stability of the cell wall and for optimal growth. Required for resistance against several antifungal and cell wall-perturbing agents and for tolerance to heat shock. The chain is Cell wall mannoprotein PIR1 (PIR1) from Saccharomyces cerevisiae (strain YJM789) (Baker's yeast).